Here is a 300-residue protein sequence, read N- to C-terminus: N-acetylmannosamine kinase (300 aa).

Residues 5–12 (ALDIGGTK) and 132–139 (GVGGGIVL) contribute to the ATP site. 4 residues coordinate Zn(2+): His156, Cys166, Cys168, and Cys173.

The protein belongs to the ROK (NagC/XylR) family. NanK subfamily. As to quaternary structure, homodimer.

It carries out the reaction an N-acyl-D-mannosamine + ATP = an N-acyl-D-mannosamine 6-phosphate + ADP + H(+). Its pathway is amino-sugar metabolism; N-acetylneuraminate degradation; D-fructose 6-phosphate from N-acetylneuraminate: step 2/5. Its function is as follows. Catalyzes the phosphorylation of N-acetylmannosamine (ManNAc) to ManNAc-6-P. This Haemophilus influenzae (strain PittGG) protein is N-acetylmannosamine kinase.